Here is a 307-residue protein sequence, read N- to C-terminus: D-alanine--D-alanine ligase (307 aa).

One can recognise an ATP-grasp domain in the interval 101–301; that stretch reads RDVLAAAGVP…FGELVRWMVD (201 aa). An ATP-binding site is contributed by 128–182; the sequence is LPPPYVIKPLGEGSSFGVFIVREDQAYPPQELTRSDWAFGNRVLVESYIGGRELT. Aspartate 251, glutamate 268, and asparagine 270 together coordinate Mg(2+).

It belongs to the D-alanine--D-alanine ligase family. The cofactor is Mg(2+). Mn(2+) serves as cofactor.

The protein resides in the cytoplasm. It carries out the reaction 2 D-alanine + ATP = D-alanyl-D-alanine + ADP + phosphate + H(+). It functions in the pathway cell wall biogenesis; peptidoglycan biosynthesis. Its function is as follows. Cell wall formation. The protein is D-alanine--D-alanine ligase of Beijerinckia indica subsp. indica (strain ATCC 9039 / DSM 1715 / NCIMB 8712).